Here is a 595-residue protein sequence, read N- to C-terminus: Elongation factor 4 (595 aa).

The region spanning 1 to 183 (MNVRNFSIIA…AIVERIPPPP (183 aa)) is the tr-type G domain. Residues 13-18 (DHGKST) and 130-133 (NKID) each bind GTP.

The protein belongs to the TRAFAC class translation factor GTPase superfamily. Classic translation factor GTPase family. LepA subfamily.

It localises to the cell membrane. The enzyme catalyses GTP + H2O = GDP + phosphate + H(+). Its function is as follows. Required for accurate and efficient protein synthesis under certain stress conditions. May act as a fidelity factor of the translation reaction, by catalyzing a one-codon backward translocation of tRNAs on improperly translocated ribosomes. Back-translocation proceeds from a post-translocation (POST) complex to a pre-translocation (PRE) complex, thus giving elongation factor G a second chance to translocate the tRNAs correctly. Binds to ribosomes in a GTP-dependent manner. This is Elongation factor 4 from Deinococcus geothermalis (strain DSM 11300 / CIP 105573 / AG-3a).